The sequence spans 199 residues: Cilia- and flagella-associated protein 20 (199 aa).

Belongs to the CFAP20 family. Expressed in spermatocytes and chordotonal organs in sensory neurons of the antenna.

The protein resides in the nucleus. Its subcellular location is the nucleolus. It is found in the cell projection. The protein localises to the cilium. It localises to the cytoplasm. The protein resides in the cytoskeleton. Its subcellular location is the microtubule organizing center. It is found in the centrosome. The protein localises to the centriole. It localises to the flagellum. The protein resides in the cilium axoneme. Functionally, cilium- and flagellum-specific protein that plays a role in axonemal structure organization and motility. Microtubule inner protein (MIP) part of the dynein-decorated doublet microtubules (DMTs) in cilia axoneme, which is required for motile cilia beating. Involved in the regulation of the size and morphology of cilia. Required for sperm individualization, differentiation of the sperm flagellum and tubulin polyglycylation of axonemal microtubules. This Drosophila melanogaster (Fruit fly) protein is Cilia- and flagella-associated protein 20.